The chain runs to 347 residues: S-adenosylmethionine:tRNA ribosyltransferase-isomerase (347 aa).

This sequence belongs to the QueA family. As to quaternary structure, monomer.

It localises to the cytoplasm. The catalysed reaction is 7-aminomethyl-7-carbaguanosine(34) in tRNA + S-adenosyl-L-methionine = epoxyqueuosine(34) in tRNA + adenine + L-methionine + 2 H(+). It participates in tRNA modification; tRNA-queuosine biosynthesis. Functionally, transfers and isomerizes the ribose moiety from AdoMet to the 7-aminomethyl group of 7-deazaguanine (preQ1-tRNA) to give epoxyqueuosine (oQ-tRNA). The chain is S-adenosylmethionine:tRNA ribosyltransferase-isomerase from Treponema denticola (strain ATCC 35405 / DSM 14222 / CIP 103919 / JCM 8153 / KCTC 15104).